Consider the following 90-residue polypeptide: UPF0297 protein lwe1516 (90 aa).

The protein belongs to the UPF0297 family.

The protein is UPF0297 protein lwe1516 of Listeria welshimeri serovar 6b (strain ATCC 35897 / DSM 20650 / CCUG 15529 / CIP 8149 / NCTC 11857 / SLCC 5334 / V8).